Here is a 189-residue protein sequence, read N- to C-terminus: Protein GrpE (189 aa).

A disordered region spans residues 1-37 (MSDSSKEKKKKFADMVSRQKGDDQQSDNHKQTDDLNE). Positions 17-33 (SRQKGDDQQSDNHKQTD) are enriched in basic and acidic residues.

It belongs to the GrpE family. Homodimer.

It is found in the cytoplasm. Functionally, participates actively in the response to hyperosmotic and heat shock by preventing the aggregation of stress-denatured proteins, in association with DnaK and GrpE. It is the nucleotide exchange factor for DnaK and may function as a thermosensor. Unfolded proteins bind initially to DnaJ; upon interaction with the DnaJ-bound protein, DnaK hydrolyzes its bound ATP, resulting in the formation of a stable complex. GrpE releases ADP from DnaK; ATP binding to DnaK triggers the release of the substrate protein, thus completing the reaction cycle. Several rounds of ATP-dependent interactions between DnaJ, DnaK and GrpE are required for fully efficient folding. This chain is Protein GrpE, found in Wolbachia pipientis wMel.